A 148-amino-acid chain; its full sequence is Protein SprT-like (148 aa).

A SprT-like domain is found at 6–147; that stretch reads LQQLVATISM…CGRCQGPIKL (142 aa). A Zn(2+)-binding site is contributed by His-67. Glu-68 is an active-site residue. His-71 serves as a coordination point for Zn(2+).

This sequence belongs to the SprT family. Requires Zn(2+) as cofactor.

It is found in the cytoplasm. The sequence is that of Protein SprT-like from Lactiplantibacillus plantarum (strain ATCC BAA-793 / NCIMB 8826 / WCFS1) (Lactobacillus plantarum).